A 119-amino-acid polypeptide reads, in one-letter code: Ribonuclease P protein component (119 aa).

Residues 1–24 (MRGSSRFRPHEKLRASDDYQRVKR) are disordered. A compositionally biased stretch (basic and acidic residues) spans 8–21 (RPHEKLRASDDYQR).

Belongs to the RnpA family. As to quaternary structure, consists of a catalytic RNA component (M1 or rnpB) and a protein subunit.

The enzyme catalyses Endonucleolytic cleavage of RNA, removing 5'-extranucleotides from tRNA precursor.. Functionally, RNaseP catalyzes the removal of the 5'-leader sequence from pre-tRNA to produce the mature 5'-terminus. It can also cleave other RNA substrates such as 4.5S RNA. The protein component plays an auxiliary but essential role in vivo by binding to the 5'-leader sequence and broadening the substrate specificity of the ribozyme. The sequence is that of Ribonuclease P protein component from Syntrophobacter fumaroxidans (strain DSM 10017 / MPOB).